The primary structure comprises 561 residues: Arginine--tRNA ligase (561 aa).

Positions 128–138 (ANPTGPLHVGH) match the 'HIGH' region motif.

It belongs to the class-I aminoacyl-tRNA synthetase family. In terms of assembly, monomer.

Its subcellular location is the cytoplasm. It carries out the reaction tRNA(Arg) + L-arginine + ATP = L-arginyl-tRNA(Arg) + AMP + diphosphate. The polypeptide is Arginine--tRNA ligase (Leptothrix cholodnii (strain ATCC 51168 / LMG 8142 / SP-6) (Leptothrix discophora (strain SP-6))).